The sequence spans 353 residues: Serine/threonine-protein phosphatase 2A activator 1 (353 aa).

The disordered stretch occupies residues 331 to 353 (ANNATTKMPPPLSTSTSRFIHRR). The span at 343-353 (STSTSRFIHRR) shows a compositional bias: polar residues.

It belongs to the PTPA-type PPIase family.

It is found in the cytoplasm. Its subcellular location is the nucleus. It catalyses the reaction [protein]-peptidylproline (omega=180) = [protein]-peptidylproline (omega=0). In terms of biological role, PPIases accelerate the folding of proteins. It catalyzes the cis-trans isomerization of proline imidic peptide bonds in oligopeptides. Acts as a regulatory subunit for PP2A-like phosphatases modulating their activity or substrate specificity, probably by inducing a conformational change in the catalytic subunit, a direct target of the PPIase. Can reactivate inactive phosphatase PP2A-phosphatase methylesterase complexes (PP2Ai) in presence of ATP and Mg(2+) by dissociating the inactive form from the complex. This is Serine/threonine-protein phosphatase 2A activator 1 (RRD1) from Kluyveromyces lactis (strain ATCC 8585 / CBS 2359 / DSM 70799 / NBRC 1267 / NRRL Y-1140 / WM37) (Yeast).